The sequence spans 632 residues: Signal-transduction and transcriptional-control protein (632 aa).

The 74-residue stretch at 197-270 folds into the PAS domain; the sequence is TYQYLNKITD…GQSYEDEEIM (74 aa). Residues 324–554 form the Sigma-54 factor interaction domain; that stretch reads IIGQSEAMKR…LENCIENIVN (231 aa). ATP contacts are provided by residues 352-359 and 416-425; these read GESGTGKE and ANEGTLFLDE. Positions 606 to 625 form a DNA-binding region, H-T-H motif; it reads ISKACRILGINRSTLYIKIK.

The sequence is that of Signal-transduction and transcriptional-control protein (stc) from Clostridium beijerinckii (Clostridium MP).